Consider the following 441-residue polypeptide: 23S rRNA (uracil(1939)-C(5))-methyltransferase RlmD (441 aa).

Residues 1–56 (MSIDSLDMEARGVGRLLNEDGTPGKVIFVEGALPGETVSYRSFRRKPSYEQAHLVE) form the TRAM domain. Cysteine 69, cysteine 75, cysteine 78, and cysteine 157 together coordinate [4Fe-4S] cluster. Residues glutamine 265, phenylalanine 294, asparagine 299, glutamate 315, asparagine 343, and aspartate 364 each coordinate S-adenosyl-L-methionine. Residue cysteine 397 is the Nucleophile of the active site.

The protein belongs to the class I-like SAM-binding methyltransferase superfamily. RNA M5U methyltransferase family. RlmD subfamily.

The catalysed reaction is uridine(1939) in 23S rRNA + S-adenosyl-L-methionine = 5-methyluridine(1939) in 23S rRNA + S-adenosyl-L-homocysteine + H(+). Catalyzes the formation of 5-methyl-uridine at position 1939 (m5U1939) in 23S rRNA. The protein is 23S rRNA (uracil(1939)-C(5))-methyltransferase RlmD of Cupriavidus necator (strain ATCC 17699 / DSM 428 / KCTC 22496 / NCIMB 10442 / H16 / Stanier 337) (Ralstonia eutropha).